The chain runs to 50 residues: Acidic phospholipase A2 1 (50 aa).

Ca(2+) contacts are provided by Tyr27, Gly29, and Gly31. Cys28 and Cys44 are oxidised to a cystine. His47 is a catalytic residue. Position 48 (Asp48) interacts with Ca(2+).

Belongs to the phospholipase A2 family. Group II subfamily. D49 sub-subfamily. In terms of assembly, monomer. It depends on Ca(2+) as a cofactor. As to expression, expressed by the venom gland.

Its subcellular location is the secreted. The catalysed reaction is a 1,2-diacyl-sn-glycero-3-phosphocholine + H2O = a 1-acyl-sn-glycero-3-phosphocholine + a fatty acid + H(+). In terms of biological role, snake venom phospholipase A2 (PLA2) that displays a potent enzymatic activity as measured by indirect hemolysis of red blood cells. Is neither lethal when injected into mice nor does it present anticoagulant activity. Displays a moderate inhibitory activity on the aggregation of platelets induced by low levels of ADP, thrombin and arachidonate. In contrast, strongly inhibits platelet aggregation induced by high doses of collagen. Shows myotoxic activity, increases the plasma creatine-kinase activity and induces edema and myonecrosis of mouse skeletal muscles. PLA2 catalyzes the calcium-dependent hydrolysis of the 2-acyl groups in 3-sn-phosphoglycerides. This Lachesis muta muta (Bushmaster) protein is Acidic phospholipase A2 1.